A 191-amino-acid polypeptide reads, in one-letter code: Photosystem I assembly protein Ycf4 (191 aa).

Transmembrane regions (helical) follow at residues 34–54 and 68–88; these read VASMLSIGGVGFLLASFSSYF and IFVPQGLVMGLYGLAAFLLAI.

This sequence belongs to the Ycf4 family.

It localises to the cellular thylakoid membrane. Seems to be required for the assembly of the photosystem I complex. The polypeptide is Photosystem I assembly protein Ycf4 (Prochlorococcus marinus (strain NATL1A)).